The sequence spans 209 residues: Interleukin-6 (209 aa).

The N-terminal stretch at 1-26 (RFTSAFSPVAFSLGLLLVMATAFPTP) is a signal peptide. Residues 28 to 47 (PVGGESQADATSNRPPLTSP) are disordered. Cys69 and Cys75 are oxidised to a cystine. Phosphoserine is present on Ser78. A disulfide bridge links Cys98 with Cys108.

The protein belongs to the IL-6 superfamily. Component of a hexamer of two molecules each of IL6, IL6R and IL6ST; first binds to IL6R to associate with the signaling subunit IL6ST. Interacts with IL6R (via the N-terminal ectodomain); this interaction may be affected by IL6R-binding with SORL1, hence decreasing IL6 cis signaling. Interacts with SORL1 (via the N-terminal ectodomain); this interaction leads to IL6 internalization and lysosomal degradation. May form a trimeric complex with the soluble SORL1 ectodomain and soluble IL6R receptor; this interaction might stabilize circulating IL6, hence promoting IL6 trans signaling.

It is found in the secreted. Its function is as follows. Cytokine with a wide variety of biological functions in immunity, tissue regeneration, and metabolism. Binds to IL6R, then the complex associates to the signaling subunit IL6ST/gp130 to trigger the intracellular IL6-signaling pathway. The interaction with the membrane-bound IL6R and IL6ST stimulates 'classic signaling', whereas the binding of IL6 and soluble IL6R to IL6ST stimulates 'trans-signaling'. Alternatively, 'cluster signaling' occurs when membrane-bound IL6:IL6R complexes on transmitter cells activate IL6ST receptors on neighboring receiver cells. In terms of biological role, IL6 is a potent inducer of the acute phase response. Rapid production of IL6 contributes to host defense during infection and tissue injury, but excessive IL6 synthesis is involved in disease pathology. In the innate immune response, is synthesized by myeloid cells, such as macrophages and dendritic cells, upon recognition of pathogens through toll-like receptors (TLRs) at the site of infection or tissue injury. In the adaptive immune response, is required for the differentiation of B cells into immunoglobulin-secreting cells. Plays a major role in the differentiation of CD4(+) T cell subsets. Essential factor for the development of T follicular helper (Tfh) cells that are required for the induction of germinal-center formation. Required to drive naive CD4(+) T cells to the Th17 lineage. Also required for proliferation of myeloma cells and the survival of plasmablast cells. Functionally, acts as an essential factor in bone homeostasis and on vessels directly or indirectly by induction of VEGF, resulting in increased angiogenesis activity and vascular permeability. Induces, through 'trans-signaling' and synergistically with IL1B and TNF, the production of VEGF. Involved in metabolic controls, is discharged into the bloodstream after muscle contraction increasing lipolysis and improving insulin resistance. 'Trans-signaling' in central nervous system also regulates energy and glucose homeostasis. Mediates, through GLP-1, crosstalk between insulin-sensitive tissues, intestinal L cells and pancreatic islets to adapt to changes in insulin demand. Also acts as a myokine. Plays a protective role during liver injury, being required for maintenance of tissue regeneration. Also has a pivotal role in iron metabolism by regulating HAMP/hepcidin expression upon inflammation or bacterial infection. Through activation of IL6ST-YAP-NOTCH pathway, induces inflammation-induced epithelial regeneration. The protein is Interleukin-6 (IL6) of Phoca vitulina (Harbor seal).